The sequence spans 184 residues: ATP synthase subunit delta (184 aa).

This sequence belongs to the ATPase delta chain family. As to quaternary structure, F-type ATPases have 2 components, F(1) - the catalytic core - and F(0) - the membrane proton channel. F(1) has five subunits: alpha(3), beta(3), gamma(1), delta(1), epsilon(1). F(0) has three main subunits: a(1), b(2) and c(10-14). The alpha and beta chains form an alternating ring which encloses part of the gamma chain. F(1) is attached to F(0) by a central stalk formed by the gamma and epsilon chains, while a peripheral stalk is formed by the delta and b chains.

Its subcellular location is the cell inner membrane. In terms of biological role, f(1)F(0) ATP synthase produces ATP from ADP in the presence of a proton or sodium gradient. F-type ATPases consist of two structural domains, F(1) containing the extramembraneous catalytic core and F(0) containing the membrane proton channel, linked together by a central stalk and a peripheral stalk. During catalysis, ATP synthesis in the catalytic domain of F(1) is coupled via a rotary mechanism of the central stalk subunits to proton translocation. Functionally, this protein is part of the stalk that links CF(0) to CF(1). It either transmits conformational changes from CF(0) to CF(1) or is implicated in proton conduction. This Rickettsia rickettsii (strain Iowa) protein is ATP synthase subunit delta.